Consider the following 242-residue polypeptide: MATDELASKLSRRLQMEGEGGGEAPEQPGLNGAAAAAAAAGAPDETAEALGSADEELSAKLLRRADLNQGIGEPQSPSRRVFNPYTEFKEFSRKQIKDMEKMFKEYDAGRDGFIDLMELKLMMEKLGAPQTHLGLKNMIKEVDEDFDSKLSFREFLLIFRKAAAGELQEDSGLHVLARLSEIDVSTEGVKGAKSFFEAKVQAMNVSSRFEEEIKAEQEERKKQAEEMKQRKAAFKELQSTFK.

Residues 1–53 (MATDELASKLSRRLQMEGEGGGEAPEQPGLNGAAAAAAAAGAPDETAEALGSA) form a disordered region. An N-acetylalanine modification is found at A2. A Phosphoserine modification is found at S11. Residues 32–42 (GAAAAAAAAGA) are compositionally biased toward low complexity. 2 positions are modified to phosphoserine: S76 and S78. Residue Y85 is modified to Phosphotyrosine. EF-hand domains lie at 94–129 (KQIK…LGAP) and 130–165 (QTHL…AAAG). Residues D107, D111, E118, D143, D145, D147, K149, and E154 each coordinate Ca(2+). K235 is subject to N6-acetyllysine.

As to quaternary structure, interacts with CASP9; with inactive form.

It is found in the membrane raft. May regulate B-cell receptor (BCR)-induced immature and primary B-cell apoptosis. Plays a role as negative regulator of the canonical NF-kappa-B-activating branch. Controls spontaneous apoptosis through the regulation of BCL2L1 abundance. In Bos taurus (Bovine), this protein is EF-hand domain-containing protein D2 (EFHD2).